A 382-amino-acid chain; its full sequence is Fimbrial usher domain-containing protein YdeT (382 aa).

This Escherichia coli O157:H7 protein is Fimbrial usher domain-containing protein YdeT (ydeT).